The sequence spans 97 residues: Co-chaperonin GroES (97 aa).

It belongs to the GroES chaperonin family. Heptamer of 7 subunits arranged in a ring. Interacts with the chaperonin GroEL.

Its subcellular location is the cytoplasm. Together with the chaperonin GroEL, plays an essential role in assisting protein folding. The GroEL-GroES system forms a nano-cage that allows encapsulation of the non-native substrate proteins and provides a physical environment optimized to promote and accelerate protein folding. GroES binds to the apical surface of the GroEL ring, thereby capping the opening of the GroEL channel. The polypeptide is Co-chaperonin GroES (Oleispira antarctica).